A 512-amino-acid chain; its full sequence is Flavonoid 3'-monooxygenase (512 aa).

The helical transmembrane segment at 1 to 21 (MEILSLILYTVIFSFLLQFIL) threads the bilayer. Over 22-512 (RSFFRKRYPL…PRLEAQAYIG (491 aa)) the chain is Cytoplasmic. Cys447 is a binding site for heme.

Belongs to the cytochrome P450 family. It depends on heme as a cofactor. High expression in petals and ovaries and to a lower extent in sepals, pedicels, anthers and stems. Not detected in leaves, style or roots.

The protein resides in the endoplasmic reticulum membrane. The catalysed reaction is a 3'-unsubstituted flavone + reduced [NADPH--hemoprotein reductase] + O2 = a 3'-hydroxyflavone + oxidized [NADPH--hemoprotein reductase] + H2O + H(+). It functions in the pathway secondary metabolite biosynthesis; flavonoid biosynthesis. Functionally, catalyzes the 3'-hydroxylation of the flavonoid B-ring to the 3',4'-hydroxylated state. Convert naringenin to eriodictyol and dihydrokaempferol to dihydroquercetin. The chain is Flavonoid 3'-monooxygenase (CYP75B2) from Petunia hybrida (Petunia).